A 201-amino-acid polypeptide reads, in one-letter code: Small ribosomal subunit protein uS4 (201 aa).

Residues 26 to 47 (LSKKNYPPGQHGNNRRRKTSEY) are disordered. One can recognise an S4 RNA-binding domain in the interval 92-154 (ARLDNVVFRL…SKSLEVIADA (63 aa)).

This sequence belongs to the universal ribosomal protein uS4 family. As to quaternary structure, part of the 30S ribosomal subunit. Contacts protein S5. The interaction surface between S4 and S5 is involved in control of translational fidelity.

Functionally, one of the primary rRNA binding proteins, it binds directly to 16S rRNA where it nucleates assembly of the body of the 30S subunit. With S5 and S12 plays an important role in translational accuracy. This Porphyromonas gingivalis (strain ATCC 33277 / DSM 20709 / CIP 103683 / JCM 12257 / NCTC 11834 / 2561) protein is Small ribosomal subunit protein uS4.